The primary structure comprises 40 residues: Cytochrome b6-f complex subunit 5 (40 aa).

A helical membrane pass occupies residues 5 to 25 (ILLGMVLGFVPVTIAGLLVAA).

It belongs to the PetG family. As to quaternary structure, the 4 large subunits of the cytochrome b6-f complex are cytochrome b6, subunit IV (17 kDa polypeptide, PetD), cytochrome f and the Rieske protein, while the 4 small subunits are PetG, PetL, PetM and PetN. The complex functions as a dimer.

It is found in the cell inner membrane. Component of the cytochrome b6-f complex, which mediates electron transfer between photosystem II (PSII) and photosystem I (PSI), cyclic electron flow around PSI, and state transitions. PetG is required for either the stability or assembly of the cytochrome b6-f complex. The protein is Cytochrome b6-f complex subunit 5 of Gloeobacter violaceus (strain ATCC 29082 / PCC 7421).